The primary structure comprises 385 residues: Succinyl-diaminopimelate desuccinylase (385 aa).

His78 serves as a coordination point for Zn(2+). Residue Asp80 is part of the active site. Zn(2+) is bound at residue Asp110. Glu144 (proton acceptor) is an active-site residue. Residues Glu145, Glu173, and His358 each contribute to the Zn(2+) site.

This sequence belongs to the peptidase M20A family. DapE subfamily. In terms of assembly, homodimer. Requires Zn(2+) as cofactor. Co(2+) serves as cofactor.

It carries out the reaction N-succinyl-(2S,6S)-2,6-diaminopimelate + H2O = (2S,6S)-2,6-diaminopimelate + succinate. It participates in amino-acid biosynthesis; L-lysine biosynthesis via DAP pathway; LL-2,6-diaminopimelate from (S)-tetrahydrodipicolinate (succinylase route): step 3/3. Functionally, catalyzes the hydrolysis of N-succinyl-L,L-diaminopimelic acid (SDAP), forming succinate and LL-2,6-diaminopimelate (DAP), an intermediate involved in the bacterial biosynthesis of lysine and meso-diaminopimelic acid, an essential component of bacterial cell walls. The protein is Succinyl-diaminopimelate desuccinylase of Gluconacetobacter diazotrophicus (strain ATCC 49037 / DSM 5601 / CCUG 37298 / CIP 103539 / LMG 7603 / PAl5).